The sequence spans 300 residues: Flaviolin linalyltransferase (300 aa).

Belongs to the aromatic prenyltransferase family. As to quaternary structure, monomer.

The catalysed reaction is flaviolin + (2E)-geranyl diphosphate = 3-linalylflaviolin + diphosphate. Its activity is regulated as follows. Does not require magnesium or any other divalent metal ions for activity. Involved in the biosynthesis of furanonaphthoquinone I (FNQ I). Catalyzes C- and O-prenylations of different phenolic substrates. With flaviolin as substrate, catalyzes the formation of a carbon-carbon-bond between C-3 (rather than C-1) of geranyl diphosphate and C-3 of flaviolin. With 1,3-dihydroxynaphthalene and 4-hydroxybenzoate as substrates, catalyzes O-prenylations. This Streptomyces virginiae (Streptomyces cinnamonensis) protein is Flaviolin linalyltransferase.